A 152-amino-acid polypeptide reads, in one-letter code: Cell division protein SepF (152 aa).

This sequence belongs to the SepF family. In terms of assembly, homodimer. Interacts with FtsZ.

It localises to the cytoplasm. Its function is as follows. Cell division protein that is part of the divisome complex and is recruited early to the Z-ring. Probably stimulates Z-ring formation, perhaps through the cross-linking of FtsZ protofilaments. Its function overlaps with FtsA. In Clostridioides difficile (strain 630) (Peptoclostridium difficile), this protein is Cell division protein SepF.